Consider the following 180-residue polypeptide: Cytokinin-beta-glucosidase 1 (180 aa).

Hydrolyzes cytokinin glucosides thus liberating free cytokinins. This chain is Cytokinin-beta-glucosidase 1 (ROLC1), found in Linaria vulgaris (Toadflax).